The sequence spans 87 residues: Translation initiation factor IF-1 (87 aa).

The S1-like domain maps to 16–87; it reads LSKEDVIEME…TKGRISYRHK (72 aa).

It belongs to the IF-1 family. In terms of assembly, component of the 30S ribosomal translation pre-initiation complex which assembles on the 30S ribosome in the order IF-2 and IF-3, IF-1 and N-formylmethionyl-tRNA(fMet); mRNA recruitment can occur at any time during PIC assembly.

It localises to the cytoplasm. One of the essential components for the initiation of protein synthesis. Stabilizes the binding of IF-2 and IF-3 on the 30S subunit to which N-formylmethionyl-tRNA(fMet) subsequently binds. Helps modulate mRNA selection, yielding the 30S pre-initiation complex (PIC). Upon addition of the 50S ribosomal subunit IF-1, IF-2 and IF-3 are released leaving the mature 70S translation initiation complex. This is Translation initiation factor IF-1 from Magnetococcus marinus (strain ATCC BAA-1437 / JCM 17883 / MC-1).